A 57-amino-acid chain; its full sequence is Large ribosomal subunit protein eL20 (57 aa).

The protein belongs to the eukaryotic ribosomal protein eL20 family. Part of the 50S ribosomal subunit. Binds 23S rRNA.

This Natronomonas pharaonis (strain ATCC 35678 / DSM 2160 / CIP 103997 / JCM 8858 / NBRC 14720 / NCIMB 2260 / Gabara) (Halobacterium pharaonis) protein is Large ribosomal subunit protein eL20.